A 688-amino-acid chain; its full sequence is Subtilisin-like protease 1 (688 aa).

The first 25 residues, 1 to 25 (MMLNKKVVALCTLTLHLFCIFLCLG), serve as a signal peptide directing secretion. Positions 26-217 (KEVRSEENGK…IESDKLVSAD (192 aa)) are cleaved as a propeptide — inhibition peptide. The tract at residues 99–129 (EKNKNDNHNNNNNNISSSSSSSSNTFGEEKE) is disordered. A compositionally biased stretch (low complexity) spans 106-122 (HNNNNNNISSSSSSSSN). An N-linked (GlcNAc...) asparagine glycan is attached at asparagine 112. Ca(2+) is bound by residues asparagine 145, threonine 148, and proline 150. An N-linked (GlcNAc...) asparagine glycan is attached at asparagine 171. Glycine 205 contacts Ca(2+). Asparagine 261 carries N-linked (GlcNAc...) asparagine glycosylation. 2 disordered regions span residues 264-284 (HAAT…DTFS) and 303-332 (NNNN…RPGK). The segment covering 303–328 (NNNNYYYSHSSNGHNSSSRNSSSSRS) has biased composition (low complexity). 2 N-linked (GlcNAc...) asparagine glycosylation sites follow: asparagine 317 and asparagine 322. Residue aspartate 337 participates in Ca(2+) binding. The Peptidase S8 domain maps to 343–661 (QWGLDLSRLD…AGYADINKAV (319 aa)). 2 disulfide bridges follow: cysteine 369-cysteine 479 and cysteine 458-cysteine 475. The active-site Charge relay system is aspartate 372. Ca(2+) is bound by residues aspartate 381, glutamate 392, arginine 396, phenylalanine 399, aspartate 400, aspartate 401, aspartate 402, asparagine 404, isoleucine 406, aspartate 408, and aspartate 409. The N-linked (GlcNAc...) asparagine glycan is linked to asparagine 417. The active-site Charge relay system is the histidine 428. Positions 439, 442, 444, and 446 each coordinate Ca(2+). N-linked (GlcNAc...) asparagine glycosylation is found at asparagine 488, asparagine 501, and asparagine 520. Cysteine 521 and cysteine 534 are joined by a disulfide. An N-linked (GlcNAc...) asparagine glycan is attached at asparagine 603. The Charge relay system role is filled by serine 606. The N-linked (GlcNAc...) asparagine glycan is linked to asparagine 675.

Belongs to the peptidase S8 family. As to quaternary structure, heterodimer between p54 form and prodomain p31; the interaction inhibits p54 catalytic activity. Heterodimer p31-p54 is monomeric at basic pH and dimeric at acidic pH; dimerization is driven by the N-terminal prodomain (p31). Requires Ca(2+) as cofactor. In terms of processing, the prodomain (p31) is cleaved, probably by autocatalysis, during the transport to or in the Golgi apparatus, and remains non-covalently associated with the p54 form as an inhibitor. p54 is further cleaved into the p47 form. The p54-to-p47 conversion can be also autocatalytic. This cleavage is likely occurring in the exoneme prior to egress and is mediated by PMX/plasmepsin X. Heterodimer p31-p54 is activated by cleavage of prodomain (p31) by the aspartic protease PMX; cleavage by PMX abolishes inhibitory capacity of p31. Primary autocatalytic processing of SUB1 is essential for parasite growth; the p54-to-p47 conversion is dispensable for SUB1 functions in the parasites. Post-translationally, the disulfide bond between Cys-521 and Cys-534 acts as a redox-sensitive disulfide switch. The oxidized form is required for catalytic activity. The relevance of the N-glycosylation is not clear. In an insect expression system, SUB1 glycosylation appears to affect its processing into the active mature form suggesting that SUB1 may not be N-glycosylated in parasites.

It is found in the secreted. It localises to the parasitophorous vacuole lumen. It carries out the reaction Hydrolysis of proteins with broad specificity for peptide bonds, and a preference for a large uncharged residue in P1. Hydrolyzes peptide amides.. P54 and probably p47 forms are inhibited by the non-covalent interaction with the cleaved propeptide. Inhibited by subtilisin propeptide-like protein SUB1-ProM. Inhibited by small molecule MRT12113. Serine protease which plays an essential role in merozoite invasion of and egress from host erythrocytes by processing and activating various merozoite surface and parasitophorous vacuole proteins. Mediates the proteolytic maturation of serine proteases SERA4, SERA5 and SERA6 just prior to merozoite egress. Prior to merozoite egress, cleaves merozoite surface proteins MSP1, MSP6 and MSP7, which form the MSP1/6/7 complex, and thereby may prime the parasite cell surface for invasion of fresh erythrocytes. Prior to merozoite egress, cleaves MSRP2 converting it to MSRP2 p25 form, and RAP1 converting it to RAP1 p67 form. The polypeptide is Subtilisin-like protease 1 (Plasmodium falciparum (isolate 3D7)).